Consider the following 434-residue polypeptide: Angio-associated migratory cell protein (434 aa).

The interval 1-63 (MESESESGAA…EEEEEEGNEE (63 aa)) is disordered. S20 is modified (phosphoserine). Over residues 39 to 62 (DPDDLAQEMEDVDFEEEEEEEGNE) the composition is skewed to acidic residues. 8 WD repeats span residues 89-129 (LHSA…LLFE), 132-171 (GHKDSVTCAGFSHDSTLVATGDMSGLLKVWQVDTKEEVWS), 173-212 (EAGDLEWMEWHPRAPVLLAGTADGNTWMWKVPNGDCKTFQ), 214-254 (PNCP…HVLK), 258-299 (GHQG…GVFR), 315-354 (SESNSVESLGFCSVMPLAAVGYLDGTLAIYDLATQTLRHQ), 356-395 (QHQSGIVQLLWEAGTAVVYTCSLDGIVRLWDARTGRLLTD), and 398-433 (GHTAEILDFALSKDASLVVTTSGDHKAKVFCVQRPD).

The protein resides in the cell membrane. It is found in the cytoplasm. Functionally, plays a role in angiogenesis and cell migration. In smooth muscle cell migration, may act through the RhoA pathway. The protein is Angio-associated migratory cell protein (AAMP) of Pongo abelii (Sumatran orangutan).